The following is a 971-amino-acid chain: Polyamine-modulated factor 1-binding protein 1 (971 aa).

Coiled-coil stretches lie at residues 37-69 (NKQY…LQAS), 117-229 (EKLH…ACSN), 282-325 (LHVE…LREE), 355-680 (QKLS…SAIQ), 706-827 (QDDL…DEKE), and 879-916 (IAKL…KAGT).

In terms of tissue distribution, expressed in testis and more specifically in ODF, the sperm tail specific cytoskeletal structure. Also expressed in epididymides and brain.

It is found in the cell projection. Its subcellular location is the cilium. It localises to the flagellum. In terms of biological role, required for normal spermatogenesis. It functions as a scaffold protein that attaches the sperm head-tail connecting piece to the nuclear envelope, thus maintaining sperm head and tail integrity. May also be involved in the general organization of cellular cytoskeleton. The chain is Polyamine-modulated factor 1-binding protein 1 (Pmfbp1) from Rattus norvegicus (Rat).